The sequence spans 513 residues: Quiannulatic acid synthase (513 aa).

The helical transmembrane segment at 14–34 (VFTFCNIILALASLVVAQCVY) threads the bilayer. N-linked (GlcNAc...) asparagine glycosylation is present at Asn-308. Cys-477 contacts heme.

The protein belongs to the cytochrome P450 family. Requires heme as cofactor.

It localises to the membrane. The catalysed reaction is quiannulatene + 3 reduced [NADPH--hemoprotein reductase] + 3 O2 = quiannulatate + 3 oxidized [NADPH--hemoprotein reductase] + 4 H2O + 4 H(+). Its pathway is secondary metabolite biosynthesis; terpenoid biosynthesis. Functionally, cytochrome P450 monooxygenase; part of the gene cluster that mediates the biosynthesis of the pentacyclic sesterterpene quiannulatic acid. The first step of the pathway is performed by the sesterterpene synthase (QS) that possesses both prenyl transferase and terpene cyclase activity, converting isopentenyl diphosphate and dimethylallyl diphosphate into geranylfarnesyl diphosphate (GFPP) and further converting GFPP into quiannulatene via an unprecedented cyclization mode which involves three rounds of hydride shifts and two successive C-C bond migrations to construct the 5-6-5-5-5 fused ring. The cytochrome P450 monooxygenase Qnn-P450 then oxidizes quiannulatene at C-19 in 3 successive reactions to afford quiannulatic acid. This Emericella variicolor (Aspergillus stellatus) protein is Quiannulatic acid synthase.